We begin with the raw amino-acid sequence, 176 residues long: NAD(P)H-quinone oxidoreductase subunit 6, chloroplastic (176 aa).

A run of 5 helical transmembrane segments spans residues 10–30 (ILLV…ILLT), 32–52 (TIYS…FYIL), 61–81 (AQLL…VMFM), 92–112 (IWTV…FSLI), and 152–172 (FILP…GAIA).

Belongs to the complex I subunit 6 family. In terms of assembly, NDH is composed of at least 16 different subunits, 5 of which are encoded in the nucleus.

The protein localises to the plastid. The protein resides in the chloroplast thylakoid membrane. The catalysed reaction is a plastoquinone + NADH + (n+1) H(+)(in) = a plastoquinol + NAD(+) + n H(+)(out). The enzyme catalyses a plastoquinone + NADPH + (n+1) H(+)(in) = a plastoquinol + NADP(+) + n H(+)(out). NDH shuttles electrons from NAD(P)H:plastoquinone, via FMN and iron-sulfur (Fe-S) centers, to quinones in the photosynthetic chain and possibly in a chloroplast respiratory chain. The immediate electron acceptor for the enzyme in this species is believed to be plastoquinone. Couples the redox reaction to proton translocation, and thus conserves the redox energy in a proton gradient. The sequence is that of NAD(P)H-quinone oxidoreductase subunit 6, chloroplastic (ndhG) from Piper cenocladum (Ant piper).